Consider the following 586-residue polypeptide: Beta-fructofuranosidase, insoluble isoenzyme 3 (586 aa).

The first 26 residues, 1–26 (MATARARAALVFVALLQMAAVVVVRA), serve as a signal peptide directing secretion. The active site involves D61. N154, N179, N341, N390, and N479 each carry an N-linked (GlcNAc...) asparagine glycan.

The protein belongs to the glycosyl hydrolase 32 family.

The protein resides in the secreted. It localises to the extracellular space. The protein localises to the apoplast. Its subcellular location is the cell wall. It carries out the reaction Hydrolysis of terminal non-reducing beta-D-fructofuranoside residues in beta-D-fructofuranosides.. The protein is Beta-fructofuranosidase, insoluble isoenzyme 3 (CIN3) of Oryza sativa subsp. indica (Rice).